The sequence spans 188 residues: dCTP deaminase (188 aa).

Residues 111 to 116 (KSTYAR), 135 to 137 (TLE), Gln156, Tyr170, and Gln180 each bind dCTP. The active-site Proton donor/acceptor is Glu137.

Belongs to the dCTP deaminase family. As to quaternary structure, homotrimer.

The enzyme catalyses dCTP + H2O + H(+) = dUTP + NH4(+). The protein operates within pyrimidine metabolism; dUMP biosynthesis; dUMP from dCTP (dUTP route): step 1/2. Catalyzes the deamination of dCTP to dUTP. This is dCTP deaminase from Aromatoleum aromaticum (strain DSM 19018 / LMG 30748 / EbN1) (Azoarcus sp. (strain EbN1)).